A 53-amino-acid chain; its full sequence is Neuronal protein NP-190 (53 aa).

In terms of tissue distribution, mainly expressed in the fetal brain where it is specifically localized to the proximal axonal segments, cell bodies and growth cones. Lower level of expression was also detected in the fetal heart and the skeletal muscle. No expression in kidney, liver, lung or spleen.

It is found in the membrane. Functionally, neuronal antigen that may play a role in brain development. May be involved in neurite formation or axonal guidance. The protein is Neuronal protein NP-190 of Sus scrofa (Pig).